Consider the following 201-residue polypeptide: ATP-dependent Clp protease proteolytic subunit (201 aa).

Residue serine 100 is the Nucleophile of the active site. Histidine 125 is an active-site residue.

The protein belongs to the peptidase S14 family. Component of the chloroplastic Clp protease core complex.

Its subcellular location is the plastid. The protein localises to the chloroplast stroma. It catalyses the reaction Hydrolysis of proteins to small peptides in the presence of ATP and magnesium. alpha-casein is the usual test substrate. In the absence of ATP, only oligopeptides shorter than five residues are hydrolyzed (such as succinyl-Leu-Tyr-|-NHMec, and Leu-Tyr-Leu-|-Tyr-Trp, in which cleavage of the -Tyr-|-Leu- and -Tyr-|-Trp bonds also occurs).. Cleaves peptides in various proteins in a process that requires ATP hydrolysis. Has a chymotrypsin-like activity. Plays a major role in the degradation of misfolded proteins. The protein is ATP-dependent Clp protease proteolytic subunit of Ranunculus macranthus (Large buttercup).